The primary structure comprises 1003 residues: Serine/threonine-protein kinase spk-1 (1003 aa).

Disordered regions lie at residues 92-112 (NSTN…TQNE), 169-309 (NEND…SATS), and 337-408 (RPSI…KRGG). A compositionally biased stretch (acidic residues) spans 202–211 (SDEEDVESQD). Over residues 248-265 (SNDDKNEKDVLVDEDTSK) the composition is skewed to basic and acidic residues. Over residues 285 to 300 (TIDSSVSSSTSSSSTG) the composition is skewed to low complexity. The segment covering 346-359 (KKTEVNANEERLDD) has biased composition (basic and acidic residues). One can recognise a Protein kinase domain in the interval 422–904 (YHVIRKLGWG…AKIALKHPFL (483 aa)). Residues 428 to 436 (LGWGHFSTV) and Lys451 contribute to the ATP site. Catalysis depends on Asp555, which acts as the Proton acceptor. The interval 927–1003 (DGLIPEPFDG…DIERFQLDLQ (77 aa)) is disordered. The segment covering 936 to 953 (GNEHQEVYRDENDSRSAS) has biased composition (basic and acidic residues). Residues 954–964 (ERSANSRSAGG) are compositionally biased toward low complexity. Residues 983–992 (VITNNETTDI) show a composition bias toward polar residues. A compositionally biased stretch (basic and acidic residues) spans 994-1003 (DIERFQLDLQ).

Belongs to the protein kinase superfamily. Ser/Thr protein kinase family. In terms of assembly, interacts with rsp-3. As to expression, predominantly coexpressed with rsp-3 in adult hermaphrodite germlines.

The catalysed reaction is L-seryl-[protein] + ATP = O-phospho-L-seryl-[protein] + ADP + H(+). The enzyme catalyses L-threonyl-[protein] + ATP = O-phospho-L-threonyl-[protein] + ADP + H(+). Required for embryogenesis and germline development in both adult hermaphrodites and males. SR-protein kinase (SRPK) that binds directly to and phosphorylates the RS domain of rsp-3/CeSF2 in vitro. The protein is Serine/threonine-protein kinase spk-1 (spk-1) of Caenorhabditis elegans.